A 635-amino-acid chain; its full sequence is Threonine--tRNA ligase (635 aa).

The TGS domain occupies 1–61 (MVSIRLPDGS…DRDAALAIIT (61 aa)). A catalytic region spans residues 242–533 (DHRKLGKQLD…LIEHHAGAMP (292 aa)). Zn(2+) is bound by residues Cys-333, His-384, and His-510.

This sequence belongs to the class-II aminoacyl-tRNA synthetase family. As to quaternary structure, homodimer. Requires Zn(2+) as cofactor.

Its subcellular location is the cytoplasm. It carries out the reaction tRNA(Thr) + L-threonine + ATP = L-threonyl-tRNA(Thr) + AMP + diphosphate + H(+). Functionally, catalyzes the attachment of threonine to tRNA(Thr) in a two-step reaction: L-threonine is first activated by ATP to form Thr-AMP and then transferred to the acceptor end of tRNA(Thr). Also edits incorrectly charged L-seryl-tRNA(Thr). The protein is Threonine--tRNA ligase of Burkholderia ambifaria (strain ATCC BAA-244 / DSM 16087 / CCUG 44356 / LMG 19182 / AMMD) (Burkholderia cepacia (strain AMMD)).